The primary structure comprises 309 residues: Olfactory receptor 1L8 (309 aa).

At 1-26 (MERINHTSSVSEFILLGLSSRPEDQK) the chain is on the extracellular side. Asn5 is a glycosylation site (N-linked (GlcNAc...) asparagine). Residues 27-50 (TLFVLFLIVYLVTITGNLLIILAI) traverse the membrane as a helical segment. The Cytoplasmic portion of the chain corresponds to 51–58 (RFNPHLQT). A helical membrane pass occupies residues 59 to 80 (PMYFFLSFLSLTDICFTTSVVP). Residues 81 to 101 (KMLMNFLSEKKTISYAGCLTQ) lie on the Extracellular side of the membrane. An intrachain disulfide couples Cys98 to Cys190. Residues 102 to 121 (MYFLYALGNSDSCLLAVMAF) traverse the membrane as a helical segment. The Cytoplasmic segment spans residues 122–140 (DRYVAVCDPFHYVTTMSHH). Residues 141-159 (HCVLLVAFSCSFPHLHSLL) traverse the membrane as a helical segment. Over 160–197 (HTLLLNRLTFCDSNVIHHFLCDLSPVLKLSCSSIFVNE) the chain is Extracellular. The chain crosses the membrane as a helical span at residues 198–220 (IVQMTEAPIVLVTRFLCIAFSYI). Residues 221 to 237 (RILTTVLKIPSTSGKRK) lie on the Cytoplasmic side of the membrane. The chain crosses the membrane as a helical span at residues 238–260 (AFSTCGFYLTVVTLFYGSIFCVY). At 261-272 (LQPPSTYAVKDH) the chain is on the extracellular side. Residues 273–292 (VATIVYTVLSSMLNPFIYSL) form a helical membrane-spanning segment. Residues 293-309 (RNKDLKQGLRKLMSKRS) lie on the Cytoplasmic side of the membrane.

Belongs to the G-protein coupled receptor 1 family.

The protein resides in the cell membrane. In terms of biological role, odorant receptor. The polypeptide is Olfactory receptor 1L8 (OR1L8) (Homo sapiens (Human)).